Here is a 130-residue protein sequence, read N- to C-terminus: Fumarate reductase subunit C (130 aa).

Helical transmembrane passes span 33–53 (AVTTMWFSILLIYGLFALKGG), 60–80 (FVTFLQNPVILLVNIITLLGA), and 109–129 (VIKLLWAVTIIVTMIILGIAL).

It belongs to the FrdC family. In terms of assembly, part of an enzyme complex containing four subunits: a flavoprotein (FrdA), an iron-sulfur protein (FrdB), and two hydrophobic anchor proteins (FrdC and FrdD).

It is found in the cell inner membrane. Its function is as follows. Two distinct, membrane-bound, FAD-containing enzymes are responsible for the catalysis of fumarate and succinate interconversion; fumarate reductase is used in anaerobic growth, and succinate dehydrogenase is used in aerobic growth. Anchors the catalytic components of the fumarate reductase complex to the cell inner membrane, binds quinones. The protein is Fumarate reductase subunit C of Photorhabdus laumondii subsp. laumondii (strain DSM 15139 / CIP 105565 / TT01) (Photorhabdus luminescens subsp. laumondii).